We begin with the raw amino-acid sequence, 171 residues long: 3-hydroxydecanoyl-[acyl-carrier-protein] dehydratase (171 aa).

Residue His70 is part of the active site.

The protein belongs to the thioester dehydratase family. FabA subfamily. As to quaternary structure, homodimer.

Its subcellular location is the cytoplasm. The enzyme catalyses a (3R)-hydroxyacyl-[ACP] = a (2E)-enoyl-[ACP] + H2O. It catalyses the reaction (3R)-hydroxydecanoyl-[ACP] = (2E)-decenoyl-[ACP] + H2O. The catalysed reaction is (2E)-decenoyl-[ACP] = (3Z)-decenoyl-[ACP]. Its pathway is lipid metabolism; fatty acid biosynthesis. Necessary for the introduction of cis unsaturation into fatty acids. Catalyzes the dehydration of (3R)-3-hydroxydecanoyl-ACP to E-(2)-decenoyl-ACP and then its isomerization to Z-(3)-decenoyl-ACP. Can catalyze the dehydratase reaction for beta-hydroxyacyl-ACPs with saturated chain lengths up to 16:0, being most active on intermediate chain length. The polypeptide is 3-hydroxydecanoyl-[acyl-carrier-protein] dehydratase (Nitrosococcus oceani (strain ATCC 19707 / BCRC 17464 / JCM 30415 / NCIMB 11848 / C-107)).